The sequence spans 741 residues: Zinc finger protein 425 (741 aa).

The region spanning 1–69 (DDVALYFSGQ…EQGCLDKTRR (69 aa)) is the KRAB domain. 2 disordered regions span residues 67-86 (TRRT…DTGK) and 128-169 (RRDT…TPGR). Polar residues predominate over residues 132–151 (FQSPSLQETEIPNKKVSITA). The segment covering 153-168 (DPDKKDLRHKPRETPG) has biased composition (basic and acidic residues). 19 consecutive C2H2-type zinc fingers follow at residues 179-201 (YSCY…KRSH), 235-257 (FQCS…QVVH), 263-285 (YPCP…LCLH), 291-313 (FCCG…LRLH), 319-341 (FQCP…LSQH), 347-369 (FHCP…QRTH), 375-397 (FSCD…IRVH), 403-425 (FSCP…GLQH), 431-453 (FQCP…QRLH), 459-481 (FPCA…TRVH), 487-509 (FPCG…LKVH), 515-537 (FSCA…TRLH), 543-565 (FQCP…QRMH), 571-593 (FACS…LRLH), 599-621 (YQCP…LLQH), 627-649 (FSCV…IRVH), 655-677 (FQCP…LYTH), 683-705 (FQCP…LCLH), and 711-733 (FSCD…IAVH).

It belongs to the krueppel C2H2-type zinc-finger protein family.

Its subcellular location is the nucleus. It localises to the cytoplasm. Its function is as follows. Acts as a transcriptional repressor. This is Zinc finger protein 425 (ZNF425) from Macaca fascicularis (Crab-eating macaque).